Here is a 179-residue protein sequence, read N- to C-terminus: Apoptosis regulator Bcl-2 homolog (179 aa).

The BH1 signature appears at 76 to 95 (ELFKDLINWGRICGFIVFSA). The BH2 motif lies at 126 to 141 (PWMISHGGQEEFLAFS).

This sequence belongs to the Bcl-2 family. In terms of assembly, interacts with host BECN1 (via BH3 homology domain); this interaction allows the virus to inhibit BECN1, and thus autophagy. Interacts with host BID. Interacts with host BAX.

It is found in the host mitochondrion. It localises to the host endoplasmic reticulum. Its function is as follows. Suppresses apoptosis in host cell to promote the viral replication. Has the ability to potentially bind to all the members of the proapoptotic Bcl-2 family. Inhibits autophagy by interacting with host Beclin 1 (BECN1). The sequence is that of Apoptosis regulator Bcl-2 homolog from African swine fever virus (isolate Tick/South Africa/Pretoriuskop Pr4/1996) (ASFV).